A 312-amino-acid polypeptide reads, in one-letter code: DNA-directed RNA polymerase subunit alpha (312 aa).

The segment at methionine 1–threonine 226 is alpha N-terminal domain (alpha-NTD). Residues serine 242 to lysine 312 form an alpha C-terminal domain (alpha-CTD) region.

This sequence belongs to the RNA polymerase alpha chain family. As to quaternary structure, homodimer. The RNAP catalytic core consists of 2 alpha, 1 beta, 1 beta' and 1 omega subunit. When a sigma factor is associated with the core the holoenzyme is formed, which can initiate transcription.

The catalysed reaction is RNA(n) + a ribonucleoside 5'-triphosphate = RNA(n+1) + diphosphate. Its function is as follows. DNA-dependent RNA polymerase catalyzes the transcription of DNA into RNA using the four ribonucleoside triphosphates as substrates. The sequence is that of DNA-directed RNA polymerase subunit alpha from Streptococcus suis (strain 98HAH33).